We begin with the raw amino-acid sequence, 191 residues long: Peptidyl-tRNA hydrolase (191 aa).

Tyr-14 contributes to the tRNA binding site. Catalysis depends on His-19, which acts as the Proton acceptor. Residues Tyr-64, Asn-66, and Asn-112 each contribute to the tRNA site.

Belongs to the PTH family. Monomer.

It localises to the cytoplasm. The catalysed reaction is an N-acyl-L-alpha-aminoacyl-tRNA + H2O = an N-acyl-L-amino acid + a tRNA + H(+). Functionally, hydrolyzes ribosome-free peptidyl-tRNAs (with 1 or more amino acids incorporated), which drop off the ribosome during protein synthesis, or as a result of ribosome stalling. Catalyzes the release of premature peptidyl moieties from peptidyl-tRNA molecules trapped in stalled 50S ribosomal subunits, and thus maintains levels of free tRNAs and 50S ribosomes. The polypeptide is Peptidyl-tRNA hydrolase (Syntrophotalea carbinolica (strain DSM 2380 / NBRC 103641 / GraBd1) (Pelobacter carbinolicus)).